The primary structure comprises 499 residues: GTPase Der (499 aa).

The EngA-type G 1 domain occupies 3–166; that stretch reads PVIALVGRPN…QALGIFPKDN (164 aa). GTP-binding positions include 9–16, 56–60, and 118–121; these read GRPNVGKS, DTGGI, and NKVD. The disordered stretch occupies residues 166-199; it reads NADENAEGEEGGELAEGEEVVAEGQEPKRIPGPS. Acidic residues predominate over residues 168-186; that stretch reads DENAEGEEGGELAEGEEVV. Positions 190–199 are enriched in basic and acidic residues; sequence QEPKRIPGPS. The EngA-type G 2 domain maps to 204–377; that stretch reads IKIAIIGRPN…SVQAAFKSAI (174 aa). Residues 210–217, 257–261, and 322–325 each bind GTP; these read GRPNVGKS, DTAGV, and NKWD. Residues 378 to 462 enclose the KH-like domain; the sequence is TRWPTSRLTQ…PIRIEYKGGD (85 aa). A compositionally biased stretch (basic and acidic residues) spans 459 to 472; it reads KGGDNPYEGKKNTL. The tract at residues 459–499 is disordered; the sequence is KGGDNPYEGKKNTLTDRQVNKKRRLMSHHKKAEKKRRDKKR. Positions 478–499 are enriched in basic residues; the sequence is NKKRRLMSHHKKAEKKRRDKKR.

It belongs to the TRAFAC class TrmE-Era-EngA-EngB-Septin-like GTPase superfamily. EngA (Der) GTPase family. Associates with the 50S ribosomal subunit.

GTPase that plays an essential role in the late steps of ribosome biogenesis. This is GTPase Der from Stutzerimonas stutzeri (strain A1501) (Pseudomonas stutzeri).